A 321-amino-acid polypeptide reads, in one-letter code: Ribosomal RNA small subunit methyltransferase H (321 aa).

Residues Gly-40–His-42, Asp-60, Phe-84, Asp-106, and Gln-113 contribute to the S-adenosyl-L-methionine site.

The protein belongs to the methyltransferase superfamily. RsmH family.

The protein resides in the cytoplasm. It catalyses the reaction cytidine(1402) in 16S rRNA + S-adenosyl-L-methionine = N(4)-methylcytidine(1402) in 16S rRNA + S-adenosyl-L-homocysteine + H(+). Functionally, specifically methylates the N4 position of cytidine in position 1402 (C1402) of 16S rRNA. The protein is Ribosomal RNA small subunit methyltransferase H of Haemophilus influenzae (strain ATCC 51907 / DSM 11121 / KW20 / Rd).